The following is a 326-amino-acid chain: Malate dehydrogenase (326 aa).

Residue 12–18 (GAAGQIA) participates in NAD(+) binding. Positions 93 and 99 each coordinate substrate. Residues Asn-106, Gln-113, and 130 to 132 (VGN) contribute to the NAD(+) site. Residues Asn-132 and Arg-163 each contribute to the substrate site. His-188 serves as the catalytic Proton acceptor.

This sequence belongs to the LDH/MDH superfamily. MDH type 2 family.

It carries out the reaction (S)-malate + NAD(+) = oxaloacetate + NADH + H(+). Its function is as follows. Catalyzes the reversible oxidation of malate to oxaloacetate. The protein is Malate dehydrogenase of Corynebacterium diphtheriae (strain ATCC 700971 / NCTC 13129 / Biotype gravis).